The chain runs to 218 residues: Variable small protein 8 (218 aa).

The N-terminal stretch at 1 to 18 is a signal peptide; it reads MRKRISAIIMTLFMVFMS. The N-palmitoyl cysteine moiety is linked to residue C19. A lipid anchor (S-diacylglycerol cysteine) is attached at C19.

This sequence belongs to the variable small protein (Vsp) family.

The protein localises to the cell outer membrane. Functionally, the Vlp and Vsp proteins are antigenically distinct proteins, only one vlp or vsp gene is transcriptionally active at any one time. Switching between these genes is a mechanism of host immune response evasion. This chain is Variable small protein 8, found in Borrelia hermsii.